Reading from the N-terminus, the 377-residue chain is Protein RecA (377 aa).

76 to 83 (GPESSGKT) contributes to the ATP binding site. The segment at 346-377 (TNGNNGEDHEGTEPVEIEAEDAAPKKGKKGKH) is disordered.

Belongs to the RecA family.

The protein localises to the cytoplasm. Can catalyze the hydrolysis of ATP in the presence of single-stranded DNA, the ATP-dependent uptake of single-stranded DNA by duplex DNA, and the ATP-dependent hybridization of homologous single-stranded DNAs. It interacts with LexA causing its activation and leading to its autocatalytic cleavage. The chain is Protein RecA from Bdellovibrio bacteriovorus (strain ATCC 15356 / DSM 50701 / NCIMB 9529 / HD100).